A 512-amino-acid chain; its full sequence is 2-isopropylmalate synthase (512 aa).

The Pyruvate carboxyltransferase domain maps to 4 to 266 (IQFFDTTLRD…ETNIVLNQFK (263 aa)). Mn(2+) contacts are provided by aspartate 13, histidine 201, histidine 203, and asparagine 237. A regulatory domain region spans residues 390–512 (ELKHLQVQYV…SKQADFEEVK (123 aa)).

It belongs to the alpha-IPM synthase/homocitrate synthase family. LeuA type 1 subfamily. In terms of assembly, homodimer. The cofactor is Mn(2+).

Its subcellular location is the cytoplasm. It catalyses the reaction 3-methyl-2-oxobutanoate + acetyl-CoA + H2O = (2S)-2-isopropylmalate + CoA + H(+). It participates in amino-acid biosynthesis; L-leucine biosynthesis; L-leucine from 3-methyl-2-oxobutanoate: step 1/4. In terms of biological role, catalyzes the condensation of the acetyl group of acetyl-CoA with 3-methyl-2-oxobutanoate (2-ketoisovalerate) to form 3-carboxy-3-hydroxy-4-methylpentanoate (2-isopropylmalate). The sequence is that of 2-isopropylmalate synthase from Listeria innocua serovar 6a (strain ATCC BAA-680 / CLIP 11262).